Here is a 156-residue protein sequence, read N- to C-terminus: Small ribosomal subunit protein uS7 (156 aa).

This sequence belongs to the universal ribosomal protein uS7 family. In terms of assembly, part of the 30S ribosomal subunit. Contacts proteins S9 and S11.

One of the primary rRNA binding proteins, it binds directly to 16S rRNA where it nucleates assembly of the head domain of the 30S subunit. Is located at the subunit interface close to the decoding center, probably blocks exit of the E-site tRNA. The chain is Small ribosomal subunit protein uS7 from Nitratidesulfovibrio vulgaris (strain DSM 19637 / Miyazaki F) (Desulfovibrio vulgaris).